The sequence spans 378 residues: AT-hook motif nuclear-localized protein 5 (378 aa).

Disordered stretches follow at residues 30–70, 88–160, and 302–378; these read QVAS…AEHR, VQPT…GRKQ, and NNNK…LTRG. Basic residues predominate over residues 104-113; that stretch reads VKKKRGRPRK. Residues 105 to 113 carry the Bipartite nuclear localization signal motif; the sequence is KKKRGRPRK. 2 DNA-binding regions (a.T hook) span residues 105–117 and 147–159; these read KKKR…YVPD and KRAR…TGRK. The region spanning 171–314 is the PPC domain; the sequence is TSAGLAFAPH…KTIKQEIKPK (144 aa). Polar residues-rich tracts occupy residues 316-327 and 335-345; these read EPTNSEMETTPG and STGQHTPQNFP.

In terms of assembly, interacts with AHL29.

Its subcellular location is the nucleus. Transcription factor that specifically binds AT-rich DNA sequences related to the nuclear matrix attachment regions (MARs). The polypeptide is AT-hook motif nuclear-localized protein 5 (Arabidopsis thaliana (Mouse-ear cress)).